The sequence spans 257 residues: UPF0246 protein SO_3540 (257 aa).

Belongs to the UPF0246 family.

The chain is UPF0246 protein SO_3540 from Shewanella oneidensis (strain ATCC 700550 / JCM 31522 / CIP 106686 / LMG 19005 / NCIMB 14063 / MR-1).